The following is an 862-amino-acid chain: DNA mismatch repair protein MutS (862 aa).

Residue 608–615 (GPNMAGKS) participates in ATP binding.

Belongs to the DNA mismatch repair MutS family.

In terms of biological role, this protein is involved in the repair of mismatches in DNA. It is possible that it carries out the mismatch recognition step. This protein has a weak ATPase activity. In Bacteroides fragilis (strain YCH46), this protein is DNA mismatch repair protein MutS.